Consider the following 368-residue polypeptide: Propane 2-monooxygenase, hydroxylase component small subunit (368 aa).

The span at 1 to 17 (MSAPEKPRERSFPKIEF) shows a compositional bias: basic and acidic residues. The disordered stretch occupies residues 1-32 (MSAPEKPRERSFPKIEFTDSEAGAKEFPSSKS).

Belongs to the TmoE/XamoE family. In terms of assembly, the propane 2-monooxygenase multicomponent enzyme system is composed of an electron transfer component and a monooxygenase component interacting with the effector protein MimD. The electron transfer component is composed of a reductase (MimB), and the monooxygenase component is formed by a large subunit (MimA) and a small subunit (MimC). Requires the presence of the chaperonin-like protein MimG to ensure a productive folding, resulting of a soluble MimC, which leads to the active form of MimABCD.

It carries out the reaction propane + NADH + O2 + H(+) = propan-2-ol + NAD(+) + H2O. It catalyses the reaction acetone + NADH + O2 + H(+) = hydroxyacetone + NAD(+) + H2O. The enzyme catalyses butan-2-one + NADH + O2 + H(+) = 1-hydroxy-2-butanone + NAD(+) + H2O. The catalysed reaction is phenol + NADH + O2 + H(+) = hydroquinone + NAD(+) + H2O. Functionally, component of the propane 2-monooxygenase multicomponent enzyme system which is involved in the degradation of propane via the O2-dependent hydroxylation of propane. Also involved in the degradation of acetone via the O2-dependent hydroxylation of acetone. Also able to catalyze the oxidation of phenol, methylethylketone (2-butanone), 1-propanol and 2-propanol. In Mycolicibacterium smegmatis (strain ATCC 700084 / mc(2)155) (Mycobacterium smegmatis), this protein is Propane 2-monooxygenase, hydroxylase component small subunit.